The primary structure comprises 391 residues: 4-hydroxy-3-methylbut-2-en-1-yl diphosphate synthase (flavodoxin) (391 aa).

Positions 286, 289, 321, and 328 each coordinate [4Fe-4S] cluster.

It belongs to the IspG family. Requires [4Fe-4S] cluster as cofactor.

The enzyme catalyses (2E)-4-hydroxy-3-methylbut-2-enyl diphosphate + oxidized [flavodoxin] + H2O + 2 H(+) = 2-C-methyl-D-erythritol 2,4-cyclic diphosphate + reduced [flavodoxin]. The protein operates within isoprenoid biosynthesis; isopentenyl diphosphate biosynthesis via DXP pathway; isopentenyl diphosphate from 1-deoxy-D-xylulose 5-phosphate: step 5/6. Converts 2C-methyl-D-erythritol 2,4-cyclodiphosphate (ME-2,4cPP) into 1-hydroxy-2-methyl-2-(E)-butenyl 4-diphosphate. This chain is 4-hydroxy-3-methylbut-2-en-1-yl diphosphate synthase (flavodoxin), found in Corynebacterium diphtheriae (strain ATCC 700971 / NCTC 13129 / Biotype gravis).